Consider the following 463-residue polypeptide: A-type ATP synthase subunit B (463 aa).

This sequence belongs to the ATPase alpha/beta chains family. As to quaternary structure, has multiple subunits with at least A(3), B(3), C, D, E, F, H, I and proteolipid K(x).

The protein localises to the cell membrane. Its function is as follows. Component of the A-type ATP synthase that produces ATP from ADP in the presence of a proton gradient across the membrane. The B chain is a regulatory subunit. The sequence is that of A-type ATP synthase subunit B from Aeropyrum pernix (strain ATCC 700893 / DSM 11879 / JCM 9820 / NBRC 100138 / K1).